The following is a 136-amino-acid chain: Probable flagellum biosynthesis repressor protein FlbT 2 (136 aa).

This sequence belongs to the FlbT family.

In terms of biological role, has a post-transcriptional repressor function in flagellum biogenesis. Associates with the 5'-UTR of fljK mRNA and promotes its degradation. This is Probable flagellum biosynthesis repressor protein FlbT 2 from Bradyrhizobium diazoefficiens (strain JCM 10833 / BCRC 13528 / IAM 13628 / NBRC 14792 / USDA 110).